The primary structure comprises 867 residues: Mitochondrial escape protein 2 (867 aa).

Disordered regions lie at residues methionine 1 to arginine 20 and arginine 44 to glycine 66. The N-terminal 41 residues, methionine 1–alanine 41, are a transit peptide targeting the mitochondrion. Residues histidine 42–arginine 308 lie on the Mitochondrial matrix side of the membrane. A compositionally biased stretch (low complexity) spans alanine 48–threonine 59. One can recognise an RRM domain in the interval serine 203–arginine 293. Residues isoleucine 309–isoleucine 329 traverse the membrane as a helical segment. The Mitochondrial intermembrane portion of the chain corresponds to arginine 330 to glycine 867. The span at phenylalanine 614–serine 639 shows a compositional bias: basic and acidic residues. The tract at residues phenylalanine 614–proline 647 is disordered. Residues leucine 797–methionine 857 are a coiled coil.

The protein belongs to the YME2 family.

It localises to the mitochondrion inner membrane. Functionally, plays a role in maintaining the mitochondrial genome and in controlling the mtDNA escape. Involved in the regulation of mtDNA nucleotide structure and number. May have a dispensable role in early maturation of pre-rRNA. This chain is Mitochondrial escape protein 2 (msp-45), found in Neurospora crassa (strain ATCC 24698 / 74-OR23-1A / CBS 708.71 / DSM 1257 / FGSC 987).